The sequence spans 501 residues: Raftlin-2 (501 aa).

Disordered regions lie at residues 1 to 20 (MGCG…GKIF) and 196 to 238 (SWNE…SRKG). Residue Gly-2 is the site of N-myristoyl glycine attachment. A lipid anchor (S-palmitoyl cysteine) is attached at Cys-3. Residues 224 to 233 (MEQNGSPSSS) show a composition bias toward polar residues. Ser-405 is subject to Phosphoserine. The tract at residues 407–454 (AQTTDKKASRRIKGEDKNKATSRSIGLDTTTPQPAESRHPPEECRLSP) is disordered. Residue Thr-409 is modified to Phosphothreonine. Over residues 410-425 (TDKKASRRIKGEDKNK) the composition is skewed to basic and acidic residues. The span at 427-440 (TSRSIGLDTTTPQP) shows a compositional bias: polar residues. A Phosphoserine modification is found at Ser-430. Residues 442–451 (ESRHPPEECR) are compositionally biased toward basic and acidic residues.

This sequence belongs to the raftlin family.

Its subcellular location is the cell membrane. Functionally, upon bacterial lipopolysaccharide stimulation, mediates clathrin-dependent internalization of TLR4 in dendritic cells, resulting in activation of TICAM1-mediated signaling and subsequent IFNB1 production. May regulate B-cell antigen receptor mediated-signaling. This chain is Raftlin-2 (RFTN2), found in Pongo abelii (Sumatran orangutan).